Reading from the N-terminus, the 281-residue chain is sn-glycerol-3-phosphate transport system permease protein UgpE (281 aa).

The next 6 helical transmembrane spans lie at 16–36 (LILG…AATL), 85–105 (FSIT…IVWF), 113–133 (FFWM…FPTV), 142–162 (LDSY…TFLF), 202–222 (ALFV…LLII), and 247–267 (WNQV…IVLA). The region spanning 77–268 (MLNSFIMAFS…IPPVVIVLAM (192 aa)) is the ABC transmembrane type-1 domain.

It belongs to the binding-protein-dependent transport system permease family. UgpAE subfamily. As to quaternary structure, the complex is composed of two ATP-binding proteins (UgpC), two transmembrane proteins (UgpA and UgpE) and a solute-binding protein (UgpB).

The protein localises to the cell inner membrane. Functionally, part of the ABC transporter complex UgpBAEC involved in sn-glycerol-3-phosphate (G3P) import. Probably responsible for the translocation of the substrate across the membrane. In Salmonella choleraesuis (strain SC-B67), this protein is sn-glycerol-3-phosphate transport system permease protein UgpE (ugpE).